The primary structure comprises 347 residues: Spermidine/putrescine import ATP-binding protein PotA (347 aa).

The region spanning 6-236 (IEIKNVYKEF…PKNAFVAKFI (231 aa)) is the ABC transporter domain. An ATP-binding site is contributed by 38–45 (GPSGCGKT).

The protein belongs to the ABC transporter superfamily. Spermidine/putrescine importer (TC 3.A.1.11.1) family. In terms of assembly, the complex is composed of two ATP-binding proteins (PotA), two transmembrane proteins (PotB and PotC) and a solute-binding protein (PotD).

Its subcellular location is the cell membrane. The enzyme catalyses ATP + H2O + polyamine-[polyamine-binding protein]Side 1 = ADP + phosphate + polyamineSide 2 + [polyamine-binding protein]Side 1.. In terms of biological role, part of the ABC transporter complex PotABCD involved in spermidine/putrescine import. Responsible for energy coupling to the transport system. The protein is Spermidine/putrescine import ATP-binding protein PotA of Clostridium novyi (strain NT).